We begin with the raw amino-acid sequence, 207 residues long: Outer-membrane lipoprotein LolB (207 aa).

A signal peptide spans 1-21; sequence MPLPDFRLIRLLPLAALVLTA. The N-palmitoyl cysteine moiety is linked to residue Cys-22. Cys-22 carries the S-diacylglycerol cysteine lipid modification.

This sequence belongs to the LolB family. In terms of assembly, monomer.

The protein localises to the cell outer membrane. Plays a critical role in the incorporation of lipoproteins in the outer membrane after they are released by the LolA protein. This is Outer-membrane lipoprotein LolB from Escherichia coli O7:K1 (strain IAI39 / ExPEC).